The following is a 318-amino-acid chain: NADH-ubiquinone oxidoreductase chain 1 (318 aa).

8 helical membrane-spanning segments follow: residues 3 to 23, 70 to 90, 100 to 120, 146 to 166, 171 to 191, 222 to 242, 253 to 273, and 294 to 314; these read MVNLLTMIVPILLAVAFLTLI, MFIIAPILALTLALTMWIPLP, LAVLFMLAMSSLAVYSILWSG, LAIILLSVLLLSGSFSLSTLI, HTWLMLSSWPLAMMWFISTLA, LFFMAEYANIIMMNTLTAILF, ELYTINLIIKALLLTVFFLWI, and LPLTLALCMWHVAMPITMAGI.

Belongs to the complex I subunit 1 family.

It localises to the mitochondrion inner membrane. It carries out the reaction a ubiquinone + NADH + 5 H(+)(in) = a ubiquinol + NAD(+) + 4 H(+)(out). Functionally, core subunit of the mitochondrial membrane respiratory chain NADH dehydrogenase (Complex I) that is believed to belong to the minimal assembly required for catalysis. Complex I functions in the transfer of electrons from NADH to the respiratory chain. The immediate electron acceptor for the enzyme is believed to be ubiquinone. This Pteropus vampyrus (Large flying fox) protein is NADH-ubiquinone oxidoreductase chain 1 (MT-ND1).